A 144-amino-acid polypeptide reads, in one-letter code: Large ribosomal subunit protein uL15 (144 aa).

The interval 1-58 (MKLNTLSPAAGAKHAAKRVGRGIGSGLGKTAGRGHKGQKSRSGGSIRPGFEGGQMPLK) is disordered. The span at 21–31 (RGIGSGLGKTA) shows a compositional bias: gly residues.

Belongs to the universal ribosomal protein uL15 family. As to quaternary structure, part of the 50S ribosomal subunit.

Binds to the 23S rRNA. In Psychromonas ingrahamii (strain DSM 17664 / CCUG 51855 / 37), this protein is Large ribosomal subunit protein uL15.